A 598-amino-acid chain; its full sequence is Rho-related protein racA (598 aa).

11–17 lines the GTP pocket; the sequence is DGAVGKS. An Effector region motif is present at residues 32 to 40; it reads YVPTVFDNY. Residues 57–61 and 115–118 contribute to the GTP site; these read DTAGQ and TKND. The segment at 175 to 210 is disordered; sequence ASAKKKGGFFSSSSSSSSSSSSKSSEKSVPIPPVMP. Positions 182–197 are enriched in low complexity; it reads GFFSSSSSSSSSSSSK. BTB domains are found at residues 239–344 and 405–472; these read SDVK…NYLD and SDIQ…PIEE.

This sequence in the N-terminal section; belongs to the small GTPase superfamily. Rho family. Interacts with pakB.

This chain is Rho-related protein racA (racA), found in Dictyostelium discoideum (Social amoeba).